The following is a 208-amino-acid chain: Ribosomal RNA small subunit methyltransferase J (208 aa).

S-adenosyl-L-methionine contacts are provided by residues 54–55 (RD), 70–71 (ER), and aspartate 122.

The protein belongs to the methyltransferase superfamily. RsmJ family.

Its subcellular location is the cytoplasm. The enzyme catalyses guanosine(1516) in 16S rRNA + S-adenosyl-L-methionine = N(2)-methylguanosine(1516) in 16S rRNA + S-adenosyl-L-homocysteine + H(+). Functionally, specifically methylates the guanosine in position 1516 of 16S rRNA. The polypeptide is Ribosomal RNA small subunit methyltransferase J (Agrobacterium fabrum (strain C58 / ATCC 33970) (Agrobacterium tumefaciens (strain C58))).